Reading from the N-terminus, the 374-residue chain is Peptide chain release factor 2 (374 aa).

Q256 is subject to N5-methylglutamine.

This sequence belongs to the prokaryotic/mitochondrial release factor family. In terms of processing, methylated by PrmC. Methylation increases the termination efficiency of RF2.

The protein resides in the cytoplasm. Peptide chain release factor 2 directs the termination of translation in response to the peptide chain termination codons UGA and UAA. This chain is Peptide chain release factor 2, found in Mycobacterium leprae (strain Br4923).